The primary structure comprises 197 residues: dTTP/UTP pyrophosphatase (197 aa).

D70 acts as the Proton acceptor in catalysis.

The protein belongs to the Maf family. YhdE subfamily. The cofactor is a divalent metal cation.

It is found in the cytoplasm. The catalysed reaction is dTTP + H2O = dTMP + diphosphate + H(+). The enzyme catalyses UTP + H2O = UMP + diphosphate + H(+). Nucleoside triphosphate pyrophosphatase that hydrolyzes dTTP and UTP. May have a dual role in cell division arrest and in preventing the incorporation of modified nucleotides into cellular nucleic acids. The protein is dTTP/UTP pyrophosphatase (yceF2) of Escherichia coli O6:K15:H31 (strain 536 / UPEC).